The following is a 465-amino-acid chain: Ribulose bisphosphate carboxylase large chain (465 aa).

At lysine 4 the chain carries N6,N6,N6-trimethyllysine. Residues asparagine 113 and threonine 163 each coordinate substrate. Lysine 165 acts as the Proton acceptor in catalysis. Lysine 167 lines the substrate pocket. Residues lysine 191, aspartate 193, and glutamate 194 each contribute to the Mg(2+) site. Residue lysine 191 is modified to N6-carboxylysine. The active-site Proton acceptor is the histidine 284. Substrate is bound by residues arginine 285, histidine 317, and serine 369.

This sequence belongs to the RuBisCO large chain family. Type I subfamily. In terms of assembly, heterohexadecamer of 8 large chains and 8 small chains; disulfide-linked. The disulfide link is formed within the large subunit homodimers. Mg(2+) is required as a cofactor. Post-translationally, the disulfide bond which can form in the large chain dimeric partners within the hexadecamer appears to be associated with oxidative stress and protein turnover.

The protein localises to the plastid. The protein resides in the chloroplast. It catalyses the reaction 2 (2R)-3-phosphoglycerate + 2 H(+) = D-ribulose 1,5-bisphosphate + CO2 + H2O. It carries out the reaction D-ribulose 1,5-bisphosphate + O2 = 2-phosphoglycolate + (2R)-3-phosphoglycerate + 2 H(+). In terms of biological role, ruBisCO catalyzes two reactions: the carboxylation of D-ribulose 1,5-bisphosphate, the primary event in carbon dioxide fixation, as well as the oxidative fragmentation of the pentose substrate in the photorespiration process. Both reactions occur simultaneously and in competition at the same active site. The protein is Ribulose bisphosphate carboxylase large chain of Nepenthes alata (Winged pitcher plant).